We begin with the raw amino-acid sequence, 661 residues long: Zeaxanthin epoxidase, chloroplastic (661 aa).

The N-terminal 59 residues, 1 to 59 (MLLFRATLLPSPPFFHKTYFSHLSPVIFSDDPLPVSLQRNRVSGCRKQKWRQIRTLALQ), are a transit peptide targeting the chloroplast. FAD-binding positions include 81 to 109 (RILI…LVFE) and 359 to 372 (IFTW…LLGD). One can recognise an FHA domain in the interval 555 to 609 (HIIGSISHDDSEGISIHLPFPQVHKTHARIACKDNIFYLTDLQSQYGTWITDNEG).

FAD is required as a cofactor. In terms of tissue distribution, expressed in flower buds, lips and leaves. Detected in roots.

It localises to the plastid. The protein resides in the chloroplast. It carries out the reaction all-trans-zeaxanthin + 4 reduced [2Fe-2S]-[ferredoxin] + 2 O2 + 4 H(+) = all-trans-violaxanthin + 4 oxidized [2Fe-2S]-[ferredoxin] + 2 H2O. Its pathway is plant hormone biosynthesis; abscisate biosynthesis. Functionally, zeaxanthin epoxidase that plays an important role in the xanthophyll cycle and abscisic acid (ABA) biosynthesis. Converts zeaxanthin into antheraxanthin and subsequently violaxanthin. The polypeptide is Zeaxanthin epoxidase, chloroplastic (ZEP) (Oncidium hybrid cultivar (Orchid)).